The following is a 153-amino-acid chain: D-erythrulose-4-phosphate isomerase 1 (153 aa).

Catalysis depends on cysteine 69, which acts as the Proton acceptor.

The protein belongs to the LacAB/RpiB family.

The enzyme catalyses D-erythrulose 4-phosphate = D-erythrose 4-phosphate. It participates in carbohydrate metabolism; erythritol degradation. The protein operates within carbohydrate metabolism; D-threitol degradation. In terms of biological role, catalyzes the isomerization of D-erythrulose-4P to D-erythrose-4P. Involved in the degradation pathways of erythritol and D-threitol, that allow M.smegmatis to grow on these compounds as the sole carbon source. The protein is D-erythrulose-4-phosphate isomerase 1 of Mycolicibacterium smegmatis (strain ATCC 700084 / mc(2)155) (Mycobacterium smegmatis).